The primary structure comprises 359 residues: Protein LpfD (359 aa).

The first 24 residues, 1–24 (MLKKLIMFTGLLGGSVLFSGQALA), serve as a signal peptide directing secretion.

It belongs to the fimbrial protein family.

The protein localises to the fimbrium. The sequence is that of Protein LpfD (lpfD) from Salmonella typhimurium (strain LT2 / SGSC1412 / ATCC 700720).